We begin with the raw amino-acid sequence, 304 residues long: Recombination-associated protein RdgC (304 aa).

Belongs to the RdgC family.

It is found in the cytoplasm. The protein resides in the nucleoid. Its function is as follows. May be involved in recombination. This Shewanella oneidensis (strain ATCC 700550 / JCM 31522 / CIP 106686 / LMG 19005 / NCIMB 14063 / MR-1) protein is Recombination-associated protein RdgC.